A 547-amino-acid chain; its full sequence is Membrane protein insertase YidC (547 aa).

A run of 6 helical transmembrane segments spans residues 6–26, 328–348, 351–371, 425–445, 459–479, and 499–519; these read LILV…WQKY, VVDY…LEAI, LVGN…AVFF, LPIL…LGAV, LASA…MFVQ, and PLIF…YWVV.

Belongs to the OXA1/ALB3/YidC family. Type 1 subfamily. Interacts with the Sec translocase complex via SecD. Specifically interacts with transmembrane segments of nascent integral membrane proteins during membrane integration.

Its subcellular location is the cell inner membrane. Its function is as follows. Required for the insertion and/or proper folding and/or complex formation of integral membrane proteins into the membrane. Involved in integration of membrane proteins that insert both dependently and independently of the Sec translocase complex, as well as at least some lipoproteins. Aids folding of multispanning membrane proteins. The chain is Membrane protein insertase YidC from Dechloromonas aromatica (strain RCB).